We begin with the raw amino-acid sequence, 166 residues long: MFPMVTEFMNYGQQTVRAARYIGQGFMITLSHANRLPVTIQYPYEKLITSERFRGRIHFEFDKCIACEVCVRVCPIDLPVVDWKLETDIRKKRLLNYSIDFGICIFCGNCVEYCPTNCLSMTEEYELSTYDRHELNYNQIALGRLPMSIIDDYTIRTIFNLPEIKT.

4Fe-4S ferredoxin-type domains follow at residues 55 to 84 (GRIH…VDWK) and 95 to 124 (LNYS…MTEE). [4Fe-4S] cluster contacts are provided by Cys64, Cys67, Cys70, Cys74, Cys104, Cys107, Cys110, and Cys114.

It belongs to the complex I 23 kDa subunit family. In terms of assembly, NDH is composed of at least 16 different subunits, 5 of which are encoded in the nucleus. It depends on [4Fe-4S] cluster as a cofactor.

The protein resides in the plastid. Its subcellular location is the chloroplast thylakoid membrane. It catalyses the reaction a plastoquinone + NADH + (n+1) H(+)(in) = a plastoquinol + NAD(+) + n H(+)(out). The enzyme catalyses a plastoquinone + NADPH + (n+1) H(+)(in) = a plastoquinol + NADP(+) + n H(+)(out). In terms of biological role, NDH shuttles electrons from NAD(P)H:plastoquinone, via FMN and iron-sulfur (Fe-S) centers, to quinones in the photosynthetic chain and possibly in a chloroplast respiratory chain. The immediate electron acceptor for the enzyme in this species is believed to be plastoquinone. Couples the redox reaction to proton translocation, and thus conserves the redox energy in a proton gradient. The polypeptide is NAD(P)H-quinone oxidoreductase subunit I, chloroplastic (Oteiza scandens (Climbing oteiza)).